The following is a 496-amino-acid chain: Xylulose kinase (496 aa).

83–84 is a binding site for substrate; the sequence is MH. Aspartate 237 functions as the Proton acceptor in the catalytic mechanism.

The protein belongs to the FGGY kinase family.

It carries out the reaction D-xylulose + ATP = D-xylulose 5-phosphate + ADP + H(+). Functionally, catalyzes the phosphorylation of D-xylulose to D-xylulose 5-phosphate. The chain is Xylulose kinase from Staphylococcus epidermidis (strain ATCC 35984 / DSM 28319 / BCRC 17069 / CCUG 31568 / BM 3577 / RP62A).